The sequence spans 515 residues: Signal transduction histidine-protein kinase/phosphatase MprB (515 aa).

The Cytoplasmic portion of the chain corresponds to 1 to 24 (MTLPPPPSRLKPPRNTSSLSLRWR). The helical transmembrane segment at 25-45 (VMLLAMSMVAMVVVLMSVAVY) threads the bilayer. Over 46 to 165 (AVVSRALYDD…TGQVLGRLGT (120 aa)) the chain is Extracellular. A helical membrane pass occupies residues 166–186 (VLLIVGGVGVAVAAIAGGMVA). The HAMP domain occupies 187–239 (RAGLRPVGRLTQAAERVARTDDLRPIPVFGSDELARLTEAFNMMLRALTESRE). Residues 187 to 515 (RAGLRPVGRL…GKSRSASKEL (329 aa)) lie on the Cytoplasmic side of the membrane. Residues 247–467 (DAGHELRTPL…SFYVMLPGRP (221 aa)) form the Histidine kinase domain. At His250 the chain carries Phosphohistidine; by autocatalysis. The disordered stretch occupies residues 468–515 (LTPGGNGTAPVPAAQFDPDMRSAGSRADRRVIKNTETNGKSRSASKEL).

The cofactor is Mg(2+). Requires Mn(2+) as cofactor. Autophosphorylated.

Its subcellular location is the cell membrane. The enzyme catalyses ATP + protein L-histidine = ADP + protein N-phospho-L-histidine.. In terms of biological role, member of the two-component regulatory system MprB/MprA which contributes to maintaining a balance among several systems involved in stress resistance and is required for establishment and maintenance of persistent infection in the host. In response to environmental signals MprB acts both as a membrane-associated protein kinase that undergoes autophosphorylation and subsequently transfers the phosphate to MprA, and a protein phosphatase that dephosphorylates phospho-MprA. This is Signal transduction histidine-protein kinase/phosphatase MprB (mprB) from Mycobacterium sp. (strain KMS).